The primary structure comprises 421 residues: Serine hydroxymethyltransferase (421 aa).

(6S)-5,6,7,8-tetrahydrofolate contacts are provided by residues Leu-123 and 127-129; that span reads GHL. Lys-232 is subject to N6-(pyridoxal phosphate)lysine.

It belongs to the SHMT family. As to quaternary structure, homodimer. Pyridoxal 5'-phosphate is required as a cofactor.

It is found in the cytoplasm. It carries out the reaction (6R)-5,10-methylene-5,6,7,8-tetrahydrofolate + glycine + H2O = (6S)-5,6,7,8-tetrahydrofolate + L-serine. It participates in one-carbon metabolism; tetrahydrofolate interconversion. It functions in the pathway amino-acid biosynthesis; glycine biosynthesis; glycine from L-serine: step 1/1. Its function is as follows. Catalyzes the reversible interconversion of serine and glycine with tetrahydrofolate (THF) serving as the one-carbon carrier. This reaction serves as the major source of one-carbon groups required for the biosynthesis of purines, thymidylate, methionine, and other important biomolecules. Also exhibits THF-independent aldolase activity toward beta-hydroxyamino acids, producing glycine and aldehydes, via a retro-aldol mechanism. This chain is Serine hydroxymethyltransferase, found in Ehrlichia canis (strain Jake).